The primary structure comprises 395 residues: RNA demethylase ALKBH5 (395 aa).

Disordered stretches follow at residues 1 to 28 and 47 to 83; these read MAAA…AGSR and AAEP…EEEA. An N-acetylalanine modification is found at A2. K58 is covalently cross-linked (Glycyl lysine isopeptide (Lys-Gly) (interchain with G-Cter in ubiquitin)). A compositionally biased stretch (basic and acidic residues) spans 60–83; the sequence is KYQEDSDPERSDYEEHQLQKEEEA. A phosphoserine mark is found at S65 and S70. The stretch at 68–117 forms a coiled coil; the sequence is ERSDYEEHQLQKEEEARKVKSGIRQIRLFSQDECSKIEARIDEVVSRAEK. Y72 is subject to Phosphotyrosine. Residue K87 forms a Glycyl lysine isopeptide (Lys-Gly) (interchain with G-Cter in SUMO1) linkage. S88 is subject to Phosphoserine. At K133 the chain carries N6-acetyllysine. Residue Y140 is part of the active site. The 2-oxoglutarate site is built by N194, Y196, and H205. The cysteines at positions 231 and 268 are disulfide-linked. N6-acetyllysine is present on K236. Positions 267 and 278 each coordinate 2-oxoglutarate. The disordered stretch occupies residues 294-395; sequence ETKSLSSSTL…PTRKVKMRRH (102 aa). Low complexity predominate over residues 296–306; that stretch reads KSLSSSTLPPS. A Glycyl lysine isopeptide (Lys-Gly) (interchain with G-Cter in SUMO1) cross-link involves residue K322. S326 is modified (phosphoserine). A Glycyl lysine isopeptide (Lys-Gly) (interchain with G-Cter in SUMO2) cross-link involves residue K329. Over residues 329–350 the composition is skewed to basic and acidic residues; it reads KADPDAAHRPRILEMDKEENRR. R360 carries the omega-N-methylarginine modification. Phosphoserine occurs at positions 362, 372, 375, and 385.

This sequence belongs to the alkB family. In terms of assembly, monomer. Interacts with RBM33; promoting desumoylation by SENP1 and recruitment to N(6)-methyladenosine-containing mRNAs. Interacts (when acetylated by KAT8) with PSPC1; interaction facilitates recognition of N(6)-methyladenosine (m6A) mRNA. Requires Fe(2+) as cofactor. Post-translationally, phosphorylated at Ser-88 and Ser-326 in response to reactive oxygen species (ROS), promoting sumoylation and inactivation. Acetylated by KAT8 at Lys-236, promoting interaction with PSPC1, thereby facilitating recognition of N(6)-methyladenosine (m6A) mRNA by ALKBH5. Deacetylated at Lys-236 by HDAC7. In terms of processing, sumoylated at Lys-87 and Lys-322 by PIAS4 following phosphorylation at Ser-88 and Ser-326 in response to reactive oxygen species (ROS), inhibiting the RNA demethylase activity. Desumoylated by SENP1; relieving RNA demethylase inhibition, leading to N(6)-methyladenosine-containing mRNAs demethylation. Post-translationally, ubiquitinated at Lys-58 via 'Lys-48'-linked polyubiquitin chain, leading to its degradation by the proteasome. Deubiquitinated at Lys-58 by USP9X, promoting its stabilizazion.

The protein localises to the nucleus speckle. It carries out the reaction an N(6)-methyladenosine in mRNA + 2-oxoglutarate + O2 = an adenosine in mRNA + formaldehyde + succinate + CO2. RNA demethylase activity is inhibited following sumoylation. Inhibition is relieved following desumoylation. Dioxygenase that specifically demethylates N(6)-methyladenosine (m6A) RNA, the most prevalent internal modification of messenger RNA (mRNA) in higher eukaryotes. Demethylates RNA by oxidative demethylation, which requires molecular oxygen, alpha-ketoglutarate and iron. Demethylation of m6A mRNA affects mRNA processing, translation and export. Can also demethylate N(6)-methyladenosine in single-stranded DNA (in vitro). Required for the late meiotic and haploid phases of spermatogenesis by mediating m6A demethylation in spermatocytes and round spermatids: m6A demethylation of target transcripts is required for correct splicing and the production of longer 3'-UTR mRNAs in male germ cells. Involved in paraspeckle assembly, a nuclear membraneless organelle, by undergoing liquid-liquid phase separation. Paraspeckle assembly is coupled with m6A demethylation of RNAs, such as NEAT1 non-coding RNA. Also acts as a negative regulator of T-cell development: inhibits gamma-delta T-cell proliferation via demethylation of JAG1 and NOTCH2 transcripts. Inhibits regulatory T-cell (Treg) recruitment by mediating demethylation and destabilization of CCL28 mRNAs. The chain is RNA demethylase ALKBH5 (Alkbh5) from Rattus norvegicus (Rat).